The primary structure comprises 186 residues: Periplasmic nitrate reductase, electron transfer subunit (186 aa).

A signal peptide spans 1–20 (MKTSKLNFLTLVASTGLALA). The heme c site is built by H87, C102, C105, H106, H123, C144, C147, and H148.

The protein belongs to the NapB family. In terms of assembly, component of the periplasmic nitrate reductase NapAB complex composed of NapA and NapB. In terms of processing, binds 2 heme C groups per subunit.

It localises to the periplasm. Electron transfer subunit of the periplasmic nitrate reductase complex NapAB. Transfers electrons to NapA subunit, thus allowing electron flow between membrane and periplasm. Essential for periplasmic nitrate reduction with nitrate as the terminal electron acceptor. This Wolinella succinogenes (strain ATCC 29543 / DSM 1740 / CCUG 13145 / JCM 31913 / LMG 7466 / NCTC 11488 / FDC 602W) (Vibrio succinogenes) protein is Periplasmic nitrate reductase, electron transfer subunit.